The following is a 90-amino-acid chain: U7-theraphotoxin-Hhn1k (90 aa).

The signal sequence occupies residues 1 to 19 (MKTAIFTVVLALAVFAVLS). A propeptide spanning residues 20-50 (FGWEANEKALSEEFTELIHEKEAASETEARE) is cleaved from the precursor. 2 disulfide bridges follow: C51–C65 and C58–C70.

It belongs to the neurotoxin 10 (Hwtx-1) family. 13 (Hntx-13) subfamily. In terms of tissue distribution, expressed by the venom gland.

The protein resides in the secreted. Functionally, ion channel inhibitor. The polypeptide is U7-theraphotoxin-Hhn1k (Cyriopagopus hainanus (Chinese bird spider)).